The chain runs to 398 residues: MNIHEYQAKALLHEFGVPISKGVPVLRPEDSDAAAKALGGPVWVVKSQIHAGGRGKGKFKEASAGDKGGVRLAKSIDEVNAFAKQMLGATLVTVQTGPDGKQVNRLYIEDGSDIDKEFYLSLLVDRETSKVAFVVSTEGGVNIEDVAHSTPEKIITFSVDPATGVMPHHGRAVAKALKLSGDLAKQAEKLTIQLYTAFVAKDMAMLEINPLVVTKQGQLRVLDAKVSFDSNALFKHPEVVALRDETEEDAKEIEASKYDLNYVALDGTIGCMVNGAGLAMATMDIIKLYGMEPANFLDVGGGASKEKVAAAFKIITADPNVKGILVNIFGGIMKCDVIAEGVVAAVKEVGLKVPLVVRLEGTNVDLGKKIISESGLNVLPADNLDDAAQKIVKAVKGG.

Residues 9–254 (KALLHEFGVP…ETEEDAKEIE (246 aa)) form the ATP-grasp domain. ATP is bound by residues K46, 53-55 (GRG), E109, S112, and E117. Mg(2+) contacts are provided by N209 and D223. Substrate-binding positions include N274 and 331 to 333 (GIM).

This sequence belongs to the succinate/malate CoA ligase beta subunit family. In terms of assembly, heterotetramer of two alpha and two beta subunits. The cofactor is Mg(2+).

It carries out the reaction succinate + ATP + CoA = succinyl-CoA + ADP + phosphate. The enzyme catalyses GTP + succinate + CoA = succinyl-CoA + GDP + phosphate. It participates in carbohydrate metabolism; tricarboxylic acid cycle; succinate from succinyl-CoA (ligase route): step 1/1. Succinyl-CoA synthetase functions in the citric acid cycle (TCA), coupling the hydrolysis of succinyl-CoA to the synthesis of either ATP or GTP and thus represents the only step of substrate-level phosphorylation in the TCA. The beta subunit provides nucleotide specificity of the enzyme and binds the substrate succinate, while the binding sites for coenzyme A and phosphate are found in the alpha subunit. The polypeptide is Succinate--CoA ligase [ADP-forming] subunit beta (Bradyrhizobium sp. (strain BTAi1 / ATCC BAA-1182)).